The chain runs to 499 residues: Tetrathionate hydrolase (499 aa).

Positions 1 to 32 (MPSIVRNHGPHNKILLSALLLALFGWVPLASA) are cleaved as a signal peptide.

It belongs to the tetrathionate hydrolase family. In terms of assembly, homodimer.

The protein resides in the cell membrane. It carries out the reaction tetrathionate + H2O = sulfur + thiosulfate + sulfate + H(+). Its function is as follows. Catalyzes the hydrolysis of tetrathionate to generate elemental sulfur, thiosulfate and sulfate. In Acidithiobacillus ferrooxidans (strain ATCC 23270 / DSM 14882 / CIP 104768 / NCIMB 8455) (Ferrobacillus ferrooxidans (strain ATCC 23270)), this protein is Tetrathionate hydrolase.